Reading from the N-terminus, the 429-residue chain is MDNLNRVASGPDVRTLMAEIGREARKAARTLSLASTETKNSALLAAAAAIRTKAGAIAAANAQDYAAAQAKGVAGSFLDRLKLDPSRIEAMARGIAEVAALPDPVGRVLARFERPNGLVIERVAVPLGVIGIIYESRPAVTADAGALCLKAGNAAILRGGSESLRSAALIHDCLVAGLLEAGLPAAAISRVPIADRAAVGEMLSGLNGDIDVIVPRGGKSLVARVQNEARVPVFAHLEGVVHIYIDRAADLAKATKILLNAKLRRTGVCGAAETLLVDRACAATHLAPLVKTLLDAGCAVRGDAAALEADPRVSPASEADWSAEYLDAIISVRLVDGIDGAIAHIEAYGSHHTDCIVTEDPAAADRFLAEVDSAIVMHNASTQFADGGEFGFGGEIGIATGRMHARGPVGVEQLTTFKYRVHGDGQIRP.

Belongs to the gamma-glutamyl phosphate reductase family.

Its subcellular location is the cytoplasm. The catalysed reaction is L-glutamate 5-semialdehyde + phosphate + NADP(+) = L-glutamyl 5-phosphate + NADPH + H(+). It functions in the pathway amino-acid biosynthesis; L-proline biosynthesis; L-glutamate 5-semialdehyde from L-glutamate: step 2/2. Catalyzes the NADPH-dependent reduction of L-glutamate 5-phosphate into L-glutamate 5-semialdehyde and phosphate. The product spontaneously undergoes cyclization to form 1-pyrroline-5-carboxylate. This chain is Gamma-glutamyl phosphate reductase, found in Methylocella silvestris (strain DSM 15510 / CIP 108128 / LMG 27833 / NCIMB 13906 / BL2).